A 449-amino-acid polypeptide reads, in one-letter code: Nucleoprotein (449 aa).

The disordered stretch occupies residues 1–55 (MSFTPGKQSSSRASSGNRSGNGILKWADQSDQSRNVQTRGRRVQSKQTATSQQPS). Residues 9 to 22 (SSSRASSGNRSGNG) show a composition bias toward low complexity. Composition is skewed to polar residues over residues 29–38 (QSDQSRNVQT) and 45–55 (SKQTATSQQPS). Residues 52–194 (QQPSGGTVVP…GYYIEGSGRS (143 aa)) are RNA-binding. In terms of domain architecture, CoV N NTD spans 61 to 190 (PYYSWFSGIT…VLPQGYYIEG (130 aa)). RNA is bound by residues Arg106, Arg122, and Arg164. Disordered regions lie at residues 158–231 (PADI…VTPD), 266–297 (ILNK…NFGG), and 387–449 (MMNI…TSEI). Ser167 is subject to Phosphoserine; by host. Thr174 bears the Phosphothreonine; by host mark. Position 191 is a phosphoserine; by host (Ser191). 2 stretches are compositionally biased toward polar residues: residues 194 to 204 (SAPNSRSTSRA) and 212 to 227 (GSRS…STPG). The CoV N CTD domain occupies 259 to 384 (AKEVRQKILN…QNLNAYQHQE (126 aa)). The span at 266-276 (ILNKPRQKRSP) shows a compositional bias: basic residues. Positions 266–385 (ILNKPRQKRS…NLNAYQHQED (120 aa)) are dimerization. Ser391 carries the phosphoserine; by host modification. The span at 400–410 (QKNGQVENDNV) shows a compositional bias: polar residues. A compositionally biased stretch (basic and acidic residues) spans 423 to 440 (KSRELTAEDISLLKKMDE). Ser424 is subject to Phosphoserine; by host. Phosphothreonine; by host is present on Thr428.

Belongs to the betacoronavirus nucleocapsid protein family. In terms of assembly, homooligomer. Both monomeric and oligomeric forms interact with RNA. Interacts with protein M. Interacts with NSP3; this interaction serves to tether the genome to the newly translated replicase-transcriptase complex at a very early stage of infection. In terms of processing, ADP-ribosylated. The ADP-ribosylation is retained in the virion during infection. Post-translationally, phosphorylated on serine and threonine residues.

It is found in the virion. It localises to the host endoplasmic reticulum-Golgi intermediate compartment. The protein resides in the host Golgi apparatus. Functionally, packages the positive strand viral genome RNA into a helical ribonucleocapsid (RNP) and plays a fundamental role during virion assembly through its interactions with the viral genome and membrane protein M. Plays an important role in enhancing the efficiency of subgenomic viral RNA transcription as well as viral replication. This is Nucleoprotein from Sus scrofa (Pig).